A 189-amino-acid polypeptide reads, in one-letter code: Elongation factor P (189 aa).

At Lys-34 the chain carries N6-(3,6-diaminohexanoyl)-5-hydroxylysine.

Belongs to the elongation factor P family. May be beta-lysylated on the epsilon-amino group of Lys-34 by the combined action of EpmA and EpmB, and then hydroxylated on the C5 position of the same residue by EpmC (if this protein is present). Lysylation is critical for the stimulatory effect of EF-P on peptide-bond formation. The lysylation moiety may extend toward the peptidyltransferase center and stabilize the terminal 3-CCA end of the tRNA. Hydroxylation of the C5 position on Lys-34 may allow additional potential stabilizing hydrogen-bond interactions with the P-tRNA.

It is found in the cytoplasm. Its pathway is protein biosynthesis; polypeptide chain elongation. Functionally, involved in peptide bond synthesis. Alleviates ribosome stalling that occurs when 3 or more consecutive Pro residues or the sequence PPG is present in a protein, possibly by augmenting the peptidyl transferase activity of the ribosome. Modification of Lys-34 is required for alleviation. In Legionella pneumophila (strain Paris), this protein is Elongation factor P.